We begin with the raw amino-acid sequence, 235 residues long: Aspartate/glutamate leucyltransferase (235 aa).

Belongs to the R-transferase family. Bpt subfamily.

It is found in the cytoplasm. It catalyses the reaction N-terminal L-glutamyl-[protein] + L-leucyl-tRNA(Leu) = N-terminal L-leucyl-L-glutamyl-[protein] + tRNA(Leu) + H(+). The enzyme catalyses N-terminal L-aspartyl-[protein] + L-leucyl-tRNA(Leu) = N-terminal L-leucyl-L-aspartyl-[protein] + tRNA(Leu) + H(+). In terms of biological role, functions in the N-end rule pathway of protein degradation where it conjugates Leu from its aminoacyl-tRNA to the N-termini of proteins containing an N-terminal aspartate or glutamate. This is Aspartate/glutamate leucyltransferase from Shewanella putrefaciens (strain CN-32 / ATCC BAA-453).